An 85-amino-acid chain; its full sequence is Small ribosomal subunit protein bS20 (85 aa).

Positions 1 to 22 are disordered; that stretch reads MANIKSAIKRAKLSEERRAHNA.

Belongs to the bacterial ribosomal protein bS20 family.

In terms of biological role, binds directly to 16S ribosomal RNA. This is Small ribosomal subunit protein bS20 from Bacillus cytotoxicus (strain DSM 22905 / CIP 110041 / 391-98 / NVH 391-98).